The following is a 104-amino-acid chain: Large ribosomal subunit protein uL24 (104 aa).

The protein belongs to the universal ribosomal protein uL24 family. As to quaternary structure, part of the 50S ribosomal subunit.

Its function is as follows. One of two assembly initiator proteins, it binds directly to the 5'-end of the 23S rRNA, where it nucleates assembly of the 50S subunit. Functionally, one of the proteins that surrounds the polypeptide exit tunnel on the outside of the subunit. The protein is Large ribosomal subunit protein uL24 of Clostridium beijerinckii (strain ATCC 51743 / NCIMB 8052) (Clostridium acetobutylicum).